The primary structure comprises 574 residues: 2-succinyl-5-enolpyruvyl-6-hydroxy-3-cyclohexene-1-carboxylate synthase (574 aa).

This sequence belongs to the TPP enzyme family. MenD subfamily. In terms of assembly, homodimer. Mg(2+) is required as a cofactor. It depends on Mn(2+) as a cofactor. Thiamine diphosphate serves as cofactor.

It carries out the reaction isochorismate + 2-oxoglutarate + H(+) = 5-enolpyruvoyl-6-hydroxy-2-succinyl-cyclohex-3-ene-1-carboxylate + CO2. The protein operates within quinol/quinone metabolism; 1,4-dihydroxy-2-naphthoate biosynthesis; 1,4-dihydroxy-2-naphthoate from chorismate: step 2/7. It participates in quinol/quinone metabolism; menaquinone biosynthesis. In terms of biological role, catalyzes the thiamine diphosphate-dependent decarboxylation of 2-oxoglutarate and the subsequent addition of the resulting succinic semialdehyde-thiamine pyrophosphate anion to isochorismate to yield 2-succinyl-5-enolpyruvyl-6-hydroxy-3-cyclohexene-1-carboxylate (SEPHCHC). In Vibrio atlanticus (strain LGP32) (Vibrio splendidus (strain Mel32)), this protein is 2-succinyl-5-enolpyruvyl-6-hydroxy-3-cyclohexene-1-carboxylate synthase.